Reading from the N-terminus, the 244-residue chain is Carboxy-S-adenosyl-L-methionine synthase (244 aa).

S-adenosyl-L-methionine is bound by residues Tyr40, Gly65–Ser67, Asp90–Asn91, Asp119–Ile120, Asn134, and Arg201.

This sequence belongs to the class I-like SAM-binding methyltransferase superfamily. Cx-SAM synthase family. Homodimer.

It catalyses the reaction prephenate + S-adenosyl-L-methionine = carboxy-S-adenosyl-L-methionine + 3-phenylpyruvate + H2O. Its function is as follows. Catalyzes the conversion of S-adenosyl-L-methionine (SAM) to carboxy-S-adenosyl-L-methionine (Cx-SAM). The chain is Carboxy-S-adenosyl-L-methionine synthase from Geobacter sp. (strain M21).